We begin with the raw amino-acid sequence, 40 residues long: Protein P4 (40 aa).

A helical membrane pass occupies residues 10 to 29 (KYFAYGVAISAAGAILAEYV).

It is found in the virion membrane. Its function is as follows. May interact with the viral DNA. This Pseudoalteromonas phage PM2 (Bacteriophage PM2) protein is Protein P4 (IV).